A 60-amino-acid chain; its full sequence is Large ribosomal subunit protein bL32 (60 aa).

Residues 1 to 23 (MAVPRNRHSNARKNIRRSHHAKQ) are disordered.

It belongs to the bacterial ribosomal protein bL32 family.

The sequence is that of Large ribosomal subunit protein bL32 from Chlamydia abortus (strain DSM 27085 / S26/3) (Chlamydophila abortus).